A 571-amino-acid polypeptide reads, in one-letter code: Optineurin (571 aa).

Disordered stretches follow at residues 1–32 (MSHQPLSCLTEKGDSPSESTGNGPPHLAHPNL) and 100–144 (LSHE…DQLR). Residues 38–170 (EELLQQMKEL…VSELQLKLNS (133 aa)) adopt a coiled-coil conformation. The segment at 58–209 (MKLNNQAMKG…GPTRTVSIGT (152 aa)) is interaction with Rab8. Basic and acidic residues predominate over residues 100–143 (LSHENEKLKEELGKLKGKSERSSEDPTDDSRLPRAEAEQEKDQL). The short motif at 176-181 (DSFVEI) is the LIR element. S177 carries the phosphoserine; by TBK1 modification. A compositionally biased stretch (basic and acidic residues) spans 186–197 (GEAEGSVKEIKH). Disordered stretches follow at residues 186-210 (GEAEGSVKEIKHSPGPTRTVSIGTS) and 255-291 (VSDFEKKASNRSEIETQTEGSTEKENEEEKGPETVGS). The residue at position 198 (S198) is a Phosphoserine. Polar residues predominate over residues 201 to 210 (PTRTVSIGTS). Residues 233–502 (CLREGNQKVE…LLKENDAFED (270 aa)) are a coiled coil. Composition is skewed to basic and acidic residues over residues 255-268 (VSDFEKKASNRSEI) and 275-286 (STEKENEEEKGP). The residue at position 336 (S336) is a Phosphoserine. Residues 405-571 (TRKESEKVDR…LQIHVMDCII (167 aa)) form an interaction with HD region. Positions 406 to 514 (RKESEKVDRA…RQSLMEMQSR (109 aa)) are interaction with MYO6. The short motif at 468 to 473 (DFHAER) is the UBAN element. S520 carries the post-translational modification Phosphoserine. The segment at 541-571 (QRNIPIHSCPKCGEVLPDIDTLQIHVMDCII) adopts a CCHC NOA-type zinc-finger fold. Residues C549, C552, H565, and C569 each coordinate Zn(2+).

In terms of assembly, self-associates. Interacts with HD. Interacts with GTF3A. Interacts with MYO6. Interacts (via UBAN) with ubiquitinated TFRC. Interacts with GTP-bound Rab8 (RAB8A and/or RAB8B). Interacts with TBC1D17. Interacts with TBK1. Interacts with TRAF3. Binds to linear ubiquitin chains. Interacts with LC3 family members MAP1LC3A, MAP1LC3B, GABARAP, GABARAPL1 and GABARAPL2; OPTN phosphorylation increases the association (at least with MAP1LC3B). Interacts with RAB12; the interaction may be indirect. Interacts with TBK1; this interaction leads to the Golgi localization of TBK1 and its subsequent activation. Interacts with palmitoyltransferase ZDHHC17/HIP14; the interaction does not lead to palmitoylation of OPTN. Interacts with CYLD. Interacts with TOM1; the interaction is indirect and is mediated by MYO6, which acts as a bridge between TOM1 and OPTN. Interacts with USP12; the interaction is independent of USP12 deubiquitinase activity and may be involved in regulation of autophagic flux. In terms of processing, phosphorylated by TBK1, leading to restrict bacterial proliferation in case of infection. As to expression, present in aqueous humor of the eye (at protein level).

It localises to the cytoplasm. The protein resides in the perinuclear region. The protein localises to the golgi apparatus. Its subcellular location is the trans-Golgi network. It is found in the cytoplasmic vesicle. It localises to the autophagosome. The protein resides in the recycling endosome. In terms of biological role, plays an important role in the maintenance of the Golgi complex, in membrane trafficking, in exocytosis, through its interaction with myosin VI and Rab8. Links myosin VI to the Golgi complex and plays an important role in Golgi ribbon formation. Negatively regulates the induction of IFNB in response to RNA virus infection. Plays a neuroprotective role in the eye and optic nerve. Probably part of the TNF-alpha signaling pathway that can shift the equilibrium toward induction of cell death. May act by regulating membrane trafficking and cellular morphogenesis via a complex that contains Rab8 and huntingtin (HD). Mediates the interaction of Rab8 with the probable GTPase-activating protein TBC1D17 during Rab8-mediated endocytic trafficking, such as that of transferrin receptor (TFRC/TfR); regulates Rab8 recruitment to tubules emanating from the endocytic recycling compartment. Autophagy receptor that interacts directly with both the cargo to become degraded and an autophagy modifier of the MAP1 LC3 family; targets ubiquitin-coated bacteria (xenophagy) and appears to function in the same pathway as SQSTM1 and CALCOCO2/NDP52. The chain is Optineurin (OPTN) from Macaca mulatta (Rhesus macaque).